Consider the following 270-residue polypeptide: MENQKIGFIGAGKMGSALMQGTIKAGIVTPENIGASDVYEPFLKDLQAKLGIRVSTDNAVIVRESDILILAVKPQTLSSVLSNLKNEITSEKLVISIAAGVPLSTYEDALLEGTRVVRVMPNIAATVSEAASGIAPGKNATPEDLKAALEIFSAVGTAVQVPESLMDAVTGLSGSGPAFIFPVIEAMADGAVLEGMDRKSALTLAAQTVLGAAKMALETGMHPGELKDMVTSPAGTTIQGIHSLEEAGIRAAFMNAVIRASERSKELGKK.

It belongs to the pyrroline-5-carboxylate reductase family.

Its subcellular location is the cytoplasm. It carries out the reaction L-proline + NADP(+) = (S)-1-pyrroline-5-carboxylate + NADPH + 2 H(+). It catalyses the reaction L-proline + NAD(+) = (S)-1-pyrroline-5-carboxylate + NADH + 2 H(+). Its pathway is amino-acid biosynthesis; L-proline biosynthesis; L-proline from L-glutamate 5-semialdehyde: step 1/1. In terms of biological role, catalyzes the reduction of 1-pyrroline-5-carboxylate (PCA) to L-proline. This is Pyrroline-5-carboxylate reductase from Methanosarcina acetivorans (strain ATCC 35395 / DSM 2834 / JCM 12185 / C2A).